We begin with the raw amino-acid sequence, 152 residues long: uncharacterized protein (152 aa).

At 1–5 the chain is on the cytoplasmic side; it reads MWFPQ. The helical transmembrane segment at 6–26 threads the bilayer; sequence IIAGMAAGGAASAMTPGKVLF. Topologically, residues 27-38 are extracellular; that stretch reads TNALGLGCSRSR. The helical transmembrane segment at 39 to 59 threads the bilayer; sequence GLFLEMFGTAVLCLTVLMTAV. The Cytoplasmic segment spans residues 60–65; sequence EKRETN. A helical transmembrane segment spans residues 66 to 86; the sequence is FMAALPIGISLFMAHMALTGY. Residues 87–110 are Extracellular-facing; the sequence is TGTGVNPARSLGAAVAARYFPHYH. Positions 92-94 match the NPA motif; that stretch reads NPA. The chain crosses the membrane as a helical span at residues 111–131; sequence WIYWISPLLGAFLAWSVWQLL. The Cytoplasmic segment spans residues 132-152; it reads QILDYTTYVNAEKAAGQKKED.

It belongs to the MIP/aquaporin (TC 1.A.8) family.

The protein resides in the membrane. This is an uncharacterized protein from Saccharomyces cerevisiae (strain RM11-1a) (Baker's yeast).